The sequence spans 545 residues: Esterase-5B (545 aa).

The N-terminal stretch at 1–19 (MYCAKLILLLGCFWISSSA) is a signal peptide. Cys-84 and Cys-103 form a disulfide bridge. The N-linked (GlcNAc...) asparagine glycan is linked to Asn-113. Ser-207 acts as the Acyl-ester intermediate in catalysis. Cys-259 and Cys-271 are disulfide-bonded. N-linked (GlcNAc...) asparagine glycosylation is present at Asn-421. Catalysis depends on His-467, which acts as the Charge relay system. Residue Asn-507 is glycosylated (N-linked (GlcNAc...) asparagine). A disulfide bond links Cys-515 and Cys-536.

Belongs to the type-B carboxylesterase/lipase family. As to quaternary structure, homodimer.

It is found in the secreted. The catalysed reaction is a carboxylic ester + H2O = an alcohol + a carboxylate + H(+). In Drosophila persimilis (Fruit fly), this protein is Esterase-5B (Est-5B).